The sequence spans 262 residues: Tetrahydromethanopterin S-methyltransferase subunit C (262 aa).

The next 7 helical transmembrane spans lie at 27-47, 72-92, 98-118, 145-165, 173-193, 200-220, and 222-242; these read LVGI…GGLL, PSIG…GVLI, LPVL…GFIV, ALAI…DIII, VIAL…NACI, KRTM…FAIA, and LDIV…GTFV.

The protein belongs to the MtrC family. In terms of assembly, the complex is composed of 8 subunits; MtrA, MtrB, MtrC, MtrD, MtrE, MtrF, MtrG and MtrH.

It is found in the cell membrane. The enzyme catalyses 5-methyl-5,6,7,8-tetrahydromethanopterin + coenzyme M + 2 Na(+)(in) = 5,6,7,8-tetrahydromethanopterin + methyl-coenzyme M + 2 Na(+)(out). It participates in one-carbon metabolism; methanogenesis from CO(2); methyl-coenzyme M from 5,10-methylene-5,6,7,8-tetrahydromethanopterin: step 2/2. In terms of biological role, part of a complex that catalyzes the formation of methyl-coenzyme M and tetrahydromethanopterin from coenzyme M and methyl-tetrahydromethanopterin. This is an energy-conserving, sodium-ion translocating step. This Methanococcus maripaludis (strain C5 / ATCC BAA-1333) protein is Tetrahydromethanopterin S-methyltransferase subunit C.